The following is a 681-amino-acid chain: Fibulin-1 (681 aa).

Residues 1-17 (MDLYMIVLLSLCGLLRA) form the signal peptide. Disulfide bonds link C29-C55, C30-C62, C43-C63, C72-C103, C85-C104, C106-C125, C107-C138, C114-C139, C162-C171, C167-C176, C178-C191, C197-C210, C204-C219, C225-C237, C243-C256, C250-C265, C271-C283, C289-C301, C317-C330, C336-C348, C343-C357, C359-C372, C378-C390, C386-C399, C401-C414, C420-C429, C440-C454, C460-C473, C469-C482, C484-C498, C504-C517, C511-C526, and C531-C553. Anaphylatoxin-like domains follow at residues 29-63 (CCED…EQCC), 68-107 (EDSI…CECC), and 108-139 (LLGS…RSCC). One can recognise an EGF-like 1 domain in the interval 158 to 192 (TEDQCRAAGCAQRCLNGTCSCLDGFKLKTDGKHCE). N173 carries an N-linked (GlcNAc...) asparagine glycan. In terms of domain architecture, EGF-like 2; calcium-binding spans 193-238 (DINECLLGPHHCVTGERCINTLGSYRCQREISCGTGYELTDNNKCK). The region spanning 239 to 284 (DIDECDLGTHNCAAEMECQNTAGSFRCRPRMQCAAGFIQDALGSCI) is the EGF-like 3; calcium-binding domain. In terms of domain architecture, EGF-like 4; calcium-binding spans 285-331 (DINECVSVTALSRGQMCFNTVGSFICQRHSVTCGRGYHLNAEGTRCV). The 42-residue stretch at 332–373 (DIDECAGPDNSCDGHGCINLVGSYRCECRTGFIFNSISRSCE) folds into the EGF-like 5; calcium-binding domain. Positions 374-415 (DIDECRNYPGRLCAHKCENILGSYKCSCTAGFKLADDGRNCD) constitute an EGF-like 6; calcium-binding domain. The 40-residue stretch at 416 to 455 (DVNECESSPCSQGCANVYGSYQSYCRRGYQLSDADGITCE) folds into the EGF-like 7; calcium-binding domain. The region spanning 456–499 (DIDECALPTGGHICSYRCHNTPGSFHCTCPASGYTLAANGRSCQ) is the EGF-like 8; calcium-binding domain. The region spanning 500–554 (DIDECLTGTHSCSESESCFNIQGGFRCLSFDCPANYRRSGDTRPRVDRADIIRCV) is the EGF-like 9; calcium-binding domain.

The protein belongs to the fibulin family. As to quaternary structure, homomultimerizes and interacts with various extracellular matrix components such as FN1, LAMA1, NID, AGC1 and CSPG2.

The protein resides in the secreted. It is found in the extracellular space. Its subcellular location is the extracellular matrix. Functionally, incorporated into fibronectin-containing matrix fibers. May play a role in cell adhesion and migration along protein fibers within the extracellular matrix (ECM). Could be important for certain developmental processes and contribute to the supramolecular organization of ECM architecture, in particular to those of basement membranes. This Danio rerio (Zebrafish) protein is Fibulin-1 (fbln1).